The primary structure comprises 205 residues: High frequency lysogenization protein HflD homolog (205 aa).

This sequence belongs to the HflD family.

The protein resides in the cytoplasm. Its subcellular location is the cell inner membrane. The polypeptide is High frequency lysogenization protein HflD homolog (Shewanella baltica (strain OS223)).